The chain runs to 137 residues: Large ribosomal subunit protein uL16 (137 aa).

Belongs to the universal ribosomal protein uL16 family. Part of the 50S ribosomal subunit.

Binds 23S rRNA and is also seen to make contacts with the A and possibly P site tRNAs. This Lawsonia intracellularis (strain PHE/MN1-00) protein is Large ribosomal subunit protein uL16.